We begin with the raw amino-acid sequence, 553 residues long: Undecaprenyl phosphate-alpha-4-amino-4-deoxy-L-arabinose arabinosyl transferase (553 aa).

A run of 12 helical transmembrane segments spans residues 8–28 (LLFS…RALW), 81–101 (FAVR…VYWL), 113–133 (LLSA…SYAV), 136–156 (PMVT…AQSA), 176–196 (LMTK…PWMI), 204–224 (LLLF…PWAI), 255–275 (APFW…VGLL), 289–309 (NSGS…FSLA), 313–333 (LPTY…HHGI), 351–371 (VAFG…WGLV), 384–404 (VLLG…CLVA), and 412–432 (AALC…DKVI).

The protein belongs to the glycosyltransferase 83 family.

The protein resides in the cell inner membrane. The catalysed reaction is 4-amino-4-deoxy-alpha-L-arabinopyranosyl di-trans,octa-cis-undecaprenyl phosphate + lipid IVA = lipid IIA + di-trans,octa-cis-undecaprenyl phosphate.. Its pathway is lipopolysaccharide metabolism; 4-amino-4-deoxy-beta-L-arabinose-lipid A biosynthesis. Catalyzes the transfer of the L-Ara4N moiety of the glycolipid undecaprenyl phosphate-alpha-L-Ara4N to lipid A. The modified arabinose is attached to lipid A and is required for resistance to polymyxin and cationic antimicrobial peptides. The sequence is that of Undecaprenyl phosphate-alpha-4-amino-4-deoxy-L-arabinose arabinosyl transferase from Erwinia tasmaniensis (strain DSM 17950 / CFBP 7177 / CIP 109463 / NCPPB 4357 / Et1/99).